Consider the following 95-residue polypeptide: Aspartyl/glutamyl-tRNA(Asn/Gln) amidotransferase subunit C (95 aa).

It belongs to the GatC family. As to quaternary structure, heterotrimer of A, B and C subunits.

It carries out the reaction L-glutamyl-tRNA(Gln) + L-glutamine + ATP + H2O = L-glutaminyl-tRNA(Gln) + L-glutamate + ADP + phosphate + H(+). It catalyses the reaction L-aspartyl-tRNA(Asn) + L-glutamine + ATP + H2O = L-asparaginyl-tRNA(Asn) + L-glutamate + ADP + phosphate + 2 H(+). Functionally, allows the formation of correctly charged Asn-tRNA(Asn) or Gln-tRNA(Gln) through the transamidation of misacylated Asp-tRNA(Asn) or Glu-tRNA(Gln) in organisms which lack either or both of asparaginyl-tRNA or glutaminyl-tRNA synthetases. The reaction takes place in the presence of glutamine and ATP through an activated phospho-Asp-tRNA(Asn) or phospho-Glu-tRNA(Gln). The chain is Aspartyl/glutamyl-tRNA(Asn/Gln) amidotransferase subunit C from Beijerinckia indica subsp. indica (strain ATCC 9039 / DSM 1715 / NCIMB 8712).